Consider the following 285-residue polypeptide: Bifunctional protein FolD (285 aa).

Residues 165–167 (GRS) and Ser190 each bind NADP(+).

The protein belongs to the tetrahydrofolate dehydrogenase/cyclohydrolase family. Homodimer.

It catalyses the reaction (6R)-5,10-methylene-5,6,7,8-tetrahydrofolate + NADP(+) = (6R)-5,10-methenyltetrahydrofolate + NADPH. It carries out the reaction (6R)-5,10-methenyltetrahydrofolate + H2O = (6R)-10-formyltetrahydrofolate + H(+). It participates in one-carbon metabolism; tetrahydrofolate interconversion. Functionally, catalyzes the oxidation of 5,10-methylenetetrahydrofolate to 5,10-methenyltetrahydrofolate and then the hydrolysis of 5,10-methenyltetrahydrofolate to 10-formyltetrahydrofolate. This is Bifunctional protein FolD from Ligilactobacillus salivarius (strain UCC118) (Lactobacillus salivarius).